Reading from the N-terminus, the 73-residue chain is UPF0154 protein BcerKBAB4_3367 (73 aa).

The helical transmembrane segment at 4–24 threads the bilayer; the sequence is WLGILVGVVALVAGVALGFFI.

This sequence belongs to the UPF0154 family.

It is found in the cell membrane. In Bacillus mycoides (strain KBAB4) (Bacillus weihenstephanensis), this protein is UPF0154 protein BcerKBAB4_3367.